The sequence spans 305 residues: Cyclin-dependent kinase 3 (305 aa).

In terms of domain architecture, Protein kinase spans 4–286; the sequence is FQKVEKIGEG…AKTALAHPYF (283 aa). Residues 10–18 and Lys-33 each bind ATP; that span reads IGEGTYGVV. Asp-127 acts as the Proton acceptor in catalysis.

This sequence belongs to the protein kinase superfamily. CMGC Ser/Thr protein kinase family. CDC2/CDKX subfamily. Interacts with CABLES1 and CABLES2. Interacts with ATF1. Binding to CCNC/cyclin-C promotes RB1 phosphorylation. As to expression, expressed in cancer cell lines and glioblastoma tissue.

It catalyses the reaction L-seryl-[protein] + ATP = O-phospho-L-seryl-[protein] + ADP + H(+). It carries out the reaction L-threonyl-[protein] + ATP = O-phospho-L-threonyl-[protein] + ADP + H(+). Serine/threonine-protein kinase that plays a critical role in the control of the eukaryotic cell cycle; involved in G0-G1 and G1-S cell cycle transitions. Interacts with CCNC/cyclin-C during interphase. Phosphorylates histone H1, ATF1, RB1 and CABLES1. ATF1 phosphorylation triggers ATF1 transactivation and transcriptional activities, and promotes cell proliferation and transformation. CDK3/cyclin-C mediated RB1 phosphorylation is required for G0-G1 transition. Promotes G1-S transition probably by contributing to the activation of E2F1, E2F2 and E2F3 in a RB1-independent manner. The protein is Cyclin-dependent kinase 3 (CDK3) of Homo sapiens (Human).